Here is a 236-residue protein sequence, read N- to C-terminus: Pyridoxine 5'-phosphate synthase (236 aa).

N6 serves as a coordination point for 3-amino-2-oxopropyl phosphate. A 1-deoxy-D-xylulose 5-phosphate-binding site is contributed by 8 to 9; that stretch reads DH. A 3-amino-2-oxopropyl phosphate-binding site is contributed by R17. H42 functions as the Proton acceptor in the catalytic mechanism. Residues R44 and H49 each contribute to the 1-deoxy-D-xylulose 5-phosphate site. E69 acts as the Proton acceptor in catalysis. Residue T99 participates in 1-deoxy-D-xylulose 5-phosphate binding. H190 functions as the Proton donor in the catalytic mechanism. Residues G191 and 212–213 contribute to the 3-amino-2-oxopropyl phosphate site; that span reads GH.

It belongs to the PNP synthase family. Homooctamer; tetramer of dimers.

It is found in the cytoplasm. The catalysed reaction is 3-amino-2-oxopropyl phosphate + 1-deoxy-D-xylulose 5-phosphate = pyridoxine 5'-phosphate + phosphate + 2 H2O + H(+). The protein operates within cofactor biosynthesis; pyridoxine 5'-phosphate biosynthesis; pyridoxine 5'-phosphate from D-erythrose 4-phosphate: step 5/5. Functionally, catalyzes the complicated ring closure reaction between the two acyclic compounds 1-deoxy-D-xylulose-5-phosphate (DXP) and 3-amino-2-oxopropyl phosphate (1-amino-acetone-3-phosphate or AAP) to form pyridoxine 5'-phosphate (PNP) and inorganic phosphate. This chain is Pyridoxine 5'-phosphate synthase, found in Chloroherpeton thalassium (strain ATCC 35110 / GB-78).